The primary structure comprises 276 residues: Small ribosomal subunit protein uS2 (276 aa).

Residues 251 to 276 (AEEAPAAAEEAPAAEPAAEETPAAEA) are disordered. Over residues 252-276 (EEAPAAAEEAPAAEPAAEETPAAEA) the composition is skewed to low complexity.

Belongs to the universal ribosomal protein uS2 family.

This chain is Small ribosomal subunit protein uS2, found in Jannaschia sp. (strain CCS1).